A 585-amino-acid chain; its full sequence is MLTRMSQLFVRTLREDPADAEVPSHRWLVRAGYIRRVAPGVYSWLPLGLRVMRRIEAICREEMASIGAQEVSFPALLASDPYKETGRWVEYGDNLFRLKDRKGVDMLLGPTHEEMFTLMVKDLYSSYKDLPLCLYQIQNKYRDEARPRAGILRGREFVMMDAYSFDVAQEGLDEAYQAQRDAYIRIFNRLGFDYAIVKAMSGPMGGSRSEEFLAVAANGEDTFVRSSGGYAANVEAVRMAVPDPLPIDGLPEAEVVDTPDARTIESLVRIANEVRPRADRPWTGADTLKNVVFMVAHPDGTREPLAIGLPGDRDVDEKRLEAVLEPAVVEPFTEEDFAANPQLVKGYIGPGALGEDNSSKVRYLVDPRVVTGTSWITGADQKDRHVFNLVAGRDFTPDGVIDVAEIREGDPAPDGSGELHLARGIEIGHIFQLGKKYADALGLKVLDHNGKLVTVTMGSYGLGVSRAVAAIAEGTCDEKGLCWPREVAPYDVQVLATGKGTEILDEATRIASELAEAGLEVLLDDRKASPGVKFADSEILGMPTSVVVGRGLKDGLVEVRDRSTGENRQVSVAEAVCAVLKEVRG.

It belongs to the class-II aminoacyl-tRNA synthetase family. ProS type 1 subfamily. In terms of assembly, homodimer.

The protein localises to the cytoplasm. It carries out the reaction tRNA(Pro) + L-proline + ATP = L-prolyl-tRNA(Pro) + AMP + diphosphate. Its function is as follows. Catalyzes the attachment of proline to tRNA(Pro) in a two-step reaction: proline is first activated by ATP to form Pro-AMP and then transferred to the acceptor end of tRNA(Pro). As ProRS can inadvertently accommodate and process non-cognate amino acids such as alanine and cysteine, to avoid such errors it has two additional distinct editing activities against alanine. One activity is designated as 'pretransfer' editing and involves the tRNA(Pro)-independent hydrolysis of activated Ala-AMP. The other activity is designated 'posttransfer' editing and involves deacylation of mischarged Ala-tRNA(Pro). The misacylated Cys-tRNA(Pro) is not edited by ProRS. This is Proline--tRNA ligase from Cutibacterium acnes (strain DSM 16379 / KPA171202) (Propionibacterium acnes).